The sequence spans 263 residues: Endonuclease 8 (263 aa).

Pro2 serves as the catalytic Schiff-base intermediate with DNA. Glu3 serves as the catalytic Proton donor. Lys53 (proton donor; for beta-elimination activity) is an active-site residue. DNA contacts are provided by Gln70, Arg125, and Asn169. The segment at 229 to 263 (KVFHRDGELCERCGGIIEKTTLSSRPFYWCPGCQH) adopts an FPG-type zinc-finger fold. The active-site Proton donor; for delta-elimination activity is the Arg253.

It belongs to the FPG family. Requires Zn(2+) as cofactor.

The catalysed reaction is 2'-deoxyribonucleotide-(2'-deoxyribose 5'-phosphate)-2'-deoxyribonucleotide-DNA = a 3'-end 2'-deoxyribonucleotide-(2,3-dehydro-2,3-deoxyribose 5'-phosphate)-DNA + a 5'-end 5'-phospho-2'-deoxyribonucleoside-DNA + H(+). Functionally, involved in base excision repair of DNA damaged by oxidation or by mutagenic agents. Acts as a DNA glycosylase that recognizes and removes damaged bases. Has a preference for oxidized pyrimidines, such as thymine glycol, 5,6-dihydrouracil and 5,6-dihydrothymine. Has AP (apurinic/apyrimidinic) lyase activity and introduces nicks in the DNA strand. Cleaves the DNA backbone by beta-delta elimination to generate a single-strand break at the site of the removed base with both 3'- and 5'-phosphates. This is Endonuclease 8 from Shigella boydii serotype 4 (strain Sb227).